The following is an 88-amino-acid chain: Apolipoprotein C-I (88 aa).

Positions 1–26 are cleaved as a signal peptide; that stretch reads MRLLLSLPVLLVALSVVLERPAPAQA.

The protein belongs to the apolipoprotein C1 family.

The protein resides in the secreted. Inhibitor of lipoprotein binding to the low density lipoprotein (LDL) receptor, LDL receptor-related protein, and very low density lipoprotein (VLDL) receptor. Associates with high density lipoproteins (HDL) and the triacylglycerol-rich lipoproteins in the plasma and makes up about 10% of the protein of the VLDL and 2% of that of HDL. Appears to interfere directly with fatty acid uptake and is also the major plasma inhibitor of cholesteryl ester transfer protein (CETP). Binds free fatty acids and reduces their intracellular esterification. Modulates the interaction of APOE with beta-migrating VLDL and inhibits binding of beta-VLDL to the LDL receptor-related protein. This Tupaia glis (Common tree shrew) protein is Apolipoprotein C-I (APOC1).